A 183-amino-acid chain; its full sequence is MVMNTDSLALIKNSIKTIPDYPKEGILFRDVTSLLEDPQAYKLTIGLLVEHYKEQGFTKVVGTEARGFLFGAPLALELGIGFVPVRKPGKLPRETISESYELEYGHDVLEIHVDAITKEDKVLVVDDLLATGGTIEATVKLIRNLGGQVNHAAFVISLPDLGGEKRLETMDLELLSLCEFEGE.

Belongs to the purine/pyrimidine phosphoribosyltransferase family. Homodimer.

Its subcellular location is the cytoplasm. It carries out the reaction AMP + diphosphate = 5-phospho-alpha-D-ribose 1-diphosphate + adenine. It participates in purine metabolism; AMP biosynthesis via salvage pathway; AMP from adenine: step 1/1. Functionally, catalyzes a salvage reaction resulting in the formation of AMP, that is energically less costly than de novo synthesis. This is Adenine phosphoribosyltransferase from Shewanella piezotolerans (strain WP3 / JCM 13877).